The following is a 593-amino-acid chain: Glucose-6-phosphate 1-dehydrogenase, chloroplastic (593 aa).

Residues 116-123 (GASGDLAK) and R150 each bind NADP(+). Residues C168 and C176 are joined by a disulfide bond. An NADP(+)-binding site is contributed by K253. Residues K253, 283–287 (HYLGK), E321, and D340 each bind D-glucose 6-phosphate. H345 functions as the Proton acceptor in the catalytic mechanism. An NADP(+)-binding site is contributed by K438. The D-glucose 6-phosphate site is built by K441 and R446. NADP(+) is bound by residues R451 and R480. Q482 lines the D-glucose 6-phosphate pocket. Residues 488-490 (YLK) and R573 each bind NADP(+).

This sequence belongs to the glucose-6-phosphate dehydrogenase family. In terms of assembly, homodimer.

It is found in the plastid. Its subcellular location is the chloroplast. The enzyme catalyses D-glucose 6-phosphate + NADP(+) = 6-phospho-D-glucono-1,5-lactone + NADPH + H(+). It functions in the pathway carbohydrate degradation; pentose phosphate pathway; D-ribulose 5-phosphate from D-glucose 6-phosphate (oxidative stage): step 1/3. With respect to regulation, regulated by metabolites. Post-translationally inactivated by cysteine-mediated redox modification via the ferredoxin-thioredoxin system in the light and this avoids futile cycles with photosynthetic CO2 fixation. Its function is as follows. Catalyzes the rate-limiting step of the oxidative pentose-phosphate pathway, which represents a route for the dissimilation of carbohydrates besides glycolysis. The main function of this enzyme is to provide reducing power (NADPH) and pentose phosphates for fatty acid and nucleic acid synthesis which are involved in membrane synthesis and cell division. The polypeptide is Glucose-6-phosphate 1-dehydrogenase, chloroplastic (Nicotiana tabacum (Common tobacco)).